The chain runs to 935 residues: MPRHKLIASESDVSIEVDEGKDKESCVYYVEVEENCERGKIKQASRDGKRRRERNGETRRKASEKRTNEGESKKAEKKHEKGHRTARKAGEKHGKRQRRKNAGEEDAEDKSSKEKKNMKNEKNKTLKLEEEKEKDVRKKKRKHVKNEEDETNHEKTKQHLKEEKRRKKRKKPETTSESESKSESESASESESKNSPAVGVLGSLTPEELENLKEAVEERKKLITQLKGKPWPMRRKLVVLRESQEFVEKYEGALGKGKGRKLYAYKVMMMKKWMKFQRDFENFKTACIPWEMKIKEIESHFGSSVASYFIFLRWMYGINMILFGLTFGLVMVPEALMGKPYGSLPRKTVPREEEASAMNFAVLWDFGGYAKYSVLFYGYYNSQRAIGWLKFRMPLSYFLVGVGTVAYSYMVVIRTMARNANEEGGGDDTSFNFSWKTFTSWDYLIGNPETADNKFASITTSFKEAIVEEQESRKDDNIHLTRFLRVLANFLVLCCLAGSGYLIYFVVRRSQKFALEGLENYGWWERNEVNMVMSLLGMFCPMLFDVISTLENYHPRIALQWQLGRIFALFLGNLYTFIIALMDAIQLKRAEEEIVKKNMTIWQANLYNGTVPDNSTAPPLTVHPADVPRGPCWETMVGQEFVRLIISDTMTTYITLLIGDFMRAVLVRFLNNCWCWDLEYGFPSYSEFDVSGNVLGLIFNQGMIWMGAFYAPCLPALNLLRLHVSMYLQCWAVMCCNVPQERVFKASGSNNFYMAMLLVILFLSTLPAIYTIVSIPPSFDCGPFSGKPRMFDVIQETLETDFPAWFSKVFSYASNPGLVLPFLLLLVLAIYYLQSTSKTYKRVNMELKKKLQAQNEENKKKNKLAALKAASDLEQARKAGEQRRNSISDLGVNEENPESHVSSSHTSRPPASRGHTSSGHLPGHPQQPQKNSKKR.

Disordered stretches follow at residues 1-21 (MPRH…DEGK) and 37-204 (ERGK…LGSL). Basic and acidic residues-rich tracts occupy residues 37-47 (ERGKIKQASRD), 54-79 (RNGE…EKKH), 109-136 (DKSS…EKDV), 152-163 (NHEKTKQHLKEE), and 172-184 (PETT…KSES). 10 consecutive transmembrane segments (helical) span residues 303–340 (SSVA…MGKP), 392–423 (RMPL…ANEE), 480–510 (LTRF…VRRS), 523–550 (WWER…ISTL), 555–589 (PRIA…QLKR), 633–670 (WETM…VRFL), 690–710 (VSGN…GAFY), 714–736 (LPAL…VMCC), 751–774 (NFYM…TIVS), and 818–851 (LVLP…KKKL). A compositionally biased stretch (basic and acidic residues) spans 874–886 (EQARKAGEQRRNS). The segment at 874–935 (EQARKAGEQR…QQPQKNSKKR (62 aa)) is disordered. 2 stretches are compositionally biased toward polar residues: residues 899-919 (SHVS…TSSG) and 926-935 (QQPQKNSKKR).

Belongs to the TMC family. Interacts specifically with isoform CD3 of PCDH15A (via cytoplasmic domain). As to expression, in adults, expression is restricted to the hair cells of inner ear and lateral line organ. Expressed at higher levels in the larval lateral-line neuromasts than in the larval inner ear. Expressed in the sensory hair cell patches of the ear at 4 days post fertilization (dpf).

The protein localises to the cell membrane. The enzyme catalyses Ca(2+)(in) = Ca(2+)(out). Its function is as follows. Pore-forming subunit of the mechanotransducer (MET) non-selective cation channel complex located at the tips of hair-cell stereocilia. Highly permeable to calcium and likely transports monovalent cations. The polypeptide is Transmembrane channel-like protein 1 (Danio rerio (Zebrafish)).